We begin with the raw amino-acid sequence, 140 residues long: uncharacterized protein (140 aa).

Asn36 carries N-linked (GlcNAc...) asparagine glycosylation. Residues 91–107 form a helical membrane-spanning segment; it reads LFMSLIGLCVCYMNLVF. A compositionally biased stretch (polar residues) spans 113–122; that stretch reads QPSSSGSKGN. The tract at residues 113–140 is disordered; the sequence is QPSSSGSKGNTETTIETTTEVETETAKQ. Residues 131–140 are compositionally biased toward acidic residues; sequence TEVETETAKQ.

It localises to the endoplasmic reticulum membrane. This is an uncharacterized protein from Saccharomyces cerevisiae (strain ATCC 204508 / S288c) (Baker's yeast).